Reading from the N-terminus, the 546-residue chain is Cholesterol oxidase (546 aa).

Positions Met1–Ala42 form a signal peptide, tat-type signal. FAD contacts are provided by Tyr57, Gly58, Glu77, Gly152, Asn156, Gly157, Met159, and Val287. Catalysis depends on proton acceptor residues Glu398 and His484. Gly512 and Phe524 together coordinate FAD.

The protein belongs to the GMC oxidoreductase family. Monomer. FAD is required as a cofactor. In terms of processing, predicted to be exported by the Tat system. The position of the signal peptide cleavage has been experimentally proven.

It localises to the secreted. The catalysed reaction is cholesterol + O2 = cholest-5-en-3-one + H2O2. The enzyme catalyses cholest-5-en-3-one = cholest-4-en-3-one. The protein operates within steroid metabolism; cholesterol degradation. Its function is as follows. Bifunctional enzyme that catalyzes the oxidation and isomerization of cholesterol to cholestenone (cholest-4-en-3-one), an initial step in the cholesterol degradation process. The cholesterol degradation pathway allows the bacterium to utilize cholesterol as its sole source of carbon and energy. This chain is Cholesterol oxidase, found in Streptomyces sp. (strain SA-COO).